A 148-amino-acid polypeptide reads, in one-letter code: Large ribosomal subunit protein bL9 (148 aa).

The protein belongs to the bacterial ribosomal protein bL9 family.

In terms of biological role, binds to the 23S rRNA. This chain is Large ribosomal subunit protein bL9, found in Acinetobacter baumannii (strain AB307-0294).